Reading from the N-terminus, the 233-residue chain is uncharacterized protein (233 aa).

Residues Leu190 to Phe233 form a disordered region. Over residues Ser195–Lys212 the composition is skewed to acidic residues.

It belongs to the asfivirus DP238L family.

This is an uncharacterized protein from Ornithodoros (relapsing fever ticks).